A 431-amino-acid chain; its full sequence is Tryptophan synthase beta chain (431 aa).

Residue Lys-109 is modified to N6-(pyridoxal phosphate)lysine.

Belongs to the TrpB family. As to quaternary structure, tetramer of two alpha and two beta chains. It depends on pyridoxal 5'-phosphate as a cofactor.

It carries out the reaction (1S,2R)-1-C-(indol-3-yl)glycerol 3-phosphate + L-serine = D-glyceraldehyde 3-phosphate + L-tryptophan + H2O. It functions in the pathway amino-acid biosynthesis; L-tryptophan biosynthesis; L-tryptophan from chorismate: step 5/5. The beta subunit is responsible for the synthesis of L-tryptophan from indole and L-serine. In Deinococcus radiodurans (strain ATCC 13939 / DSM 20539 / JCM 16871 / CCUG 27074 / LMG 4051 / NBRC 15346 / NCIMB 9279 / VKM B-1422 / R1), this protein is Tryptophan synthase beta chain.